We begin with the raw amino-acid sequence, 488 residues long: UDP-N-acetylmuramate--L-alanine ligase (488 aa).

ATP is bound at residue 126-132 (GTHGKTT).

It belongs to the MurCDEF family.

The protein localises to the cytoplasm. It catalyses the reaction UDP-N-acetyl-alpha-D-muramate + L-alanine + ATP = UDP-N-acetyl-alpha-D-muramoyl-L-alanine + ADP + phosphate + H(+). The protein operates within cell wall biogenesis; peptidoglycan biosynthesis. Functionally, cell wall formation. The sequence is that of UDP-N-acetylmuramate--L-alanine ligase from Cronobacter sakazakii (strain ATCC BAA-894) (Enterobacter sakazakii).